Reading from the N-terminus, the 273-residue chain is Zinc finger protein 80 (273 aa).

C2H2-type zinc fingers lie at residues 49–71, 77–99, 103–127, 133–155, 161–183, 189–211, and 217–239; these read YKCK…QQIH, YECQ…VRIH, KPCK…HQIH, YECS…RMTH, FGCK…MKIH, YKCS…SMTH, and YECK…TRSH.

It belongs to the krueppel C2H2-type zinc-finger protein family.

Its subcellular location is the nucleus. In terms of biological role, may be involved in transcriptional regulation. This is Zinc finger protein 80 (ZNF80) from Pongo pygmaeus (Bornean orangutan).